The primary structure comprises 967 residues: Translation initiation factor IF-2 (967 aa).

Disordered stretches follow at residues 201 to 320 (KPIV…PGFV) and 349 to 382 (LQGK…ELEA). Positions 233–248 (TGPTFSGQTIDLSQFN) are enriched in polar residues. Low complexity predominate over residues 256–272 (PNKGGAKPAGAGNNNNN). Over residues 354 to 363 (NKSKAAKYRR) the composition is skewed to basic residues. Positions 364–382 (DKRDTHRQKSDDEQRELEA) are enriched in basic and acidic residues. The region spanning 465-635 (HRAPIVTVMG…LLEAEVLDLK (171 aa)) is the tr-type G domain. The tract at residues 474–481 (GHVDHGKT) is G1. GTP is bound at residue 474–481 (GHVDHGKT). Positions 499 to 503 (GITQH) are G2. Residues 521–524 (DTPG) are G3. Residues 521–525 (DTPGH) and 575–578 (NKVD) each bind GTP. Residues 575-578 (NKVD) form a G4 region. Residues 611–613 (SAK) form a G5 region.

The protein belongs to the TRAFAC class translation factor GTPase superfamily. Classic translation factor GTPase family. IF-2 subfamily.

Its subcellular location is the cytoplasm. Functionally, one of the essential components for the initiation of protein synthesis. Protects formylmethionyl-tRNA from spontaneous hydrolysis and promotes its binding to the 30S ribosomal subunits. Also involved in the hydrolysis of GTP during the formation of the 70S ribosomal complex. The polypeptide is Translation initiation factor IF-2 (Flavobacterium psychrophilum (strain ATCC 49511 / DSM 21280 / CIP 103535 / JIP02/86)).